Here is a 308-residue protein sequence, read N- to C-terminus: Oxygen-dependent coproporphyrinogen-III oxidase (308 aa).

Residue serine 100 participates in substrate binding. Residues histidine 104 and histidine 114 each coordinate a divalent metal cation. Catalysis depends on histidine 114, which acts as the Proton donor. 116–118 (NFR) contacts substrate. Histidine 153 and histidine 183 together coordinate a divalent metal cation. Residues 248 to 283 (YVEFNLVFDRGTIFGLQSGGRTESILSSMPPMATWK) are important for dimerization. 266-268 (GGR) is a binding site for substrate.

It belongs to the aerobic coproporphyrinogen-III oxidase family. Homodimer. The cofactor is a divalent metal cation.

It is found in the cytoplasm. The catalysed reaction is coproporphyrinogen III + O2 + 2 H(+) = protoporphyrinogen IX + 2 CO2 + 2 H2O. It functions in the pathway porphyrin-containing compound metabolism; protoporphyrin-IX biosynthesis; protoporphyrinogen-IX from coproporphyrinogen-III (O2 route): step 1/1. Involved in the heme biosynthesis. Catalyzes the aerobic oxidative decarboxylation of propionate groups of rings A and B of coproporphyrinogen-III to yield the vinyl groups in protoporphyrinogen-IX. The protein is Oxygen-dependent coproporphyrinogen-III oxidase of Francisella tularensis subsp. mediasiatica (strain FSC147).